The following is a 334-amino-acid chain: MKVSKIYTTIDAHVAGEPLRIITGGVPEIKGETQLERRAYCMEHLDYLREILMYEPRGHHGMYGCIITPPASAHADFGVLFMHNEGWSTMCGHGIIAVITVGIETGMFEVTGEKQKFIIDSPAGEVIAYATYSGSEVESVSFENVPSFVYKKDVPIKIDSYEFQVDIAFGGAFYAVVDSKEFGLKVDFKDLSAIQMWGGKIKHYIESKMEVKHPLEEGLKGIYGVIFSDDPKEKDATLRNVTIFADGQVDRSPCGTGTSARIATLFAKDALQKGEIFVHECITDGKFEGEVLSVTAVHTYEAVVPKVTGNAFITGFHQFVVDPRDDLNRGFLLG.

The active-site Proton acceptor is the Cys91. Residues 92 to 93, Asp250, and 255 to 256 contribute to the substrate site; these read GH and GT.

It belongs to the proline racemase family.

The catalysed reaction is trans-3-hydroxy-L-proline = 1-pyrroline-2-carboxylate + H2O. Functionally, catalyzes the dehydration of trans-3-hydroxy-L-proline (t3LHyp) to Delta(1)-pyrroline-2-carboxylate (Pyr2C). Is likely involved in a degradation pathway that converts t3LHyp to L-proline, which allows B.cereus to grow on t3LHyp as a sole carbon source. Displays no proline racemase activity. The protein is Trans-3-hydroxy-L-proline dehydratase of Bacillus cereus (strain ATCC 14579 / DSM 31 / CCUG 7414 / JCM 2152 / NBRC 15305 / NCIMB 9373 / NCTC 2599 / NRRL B-3711).